A 626-amino-acid chain; its full sequence is Probable serine/threonine-protein kinase CCRP1 (626 aa).

The 256-residue stretch at 36–291 (YSKGRMLGKG…LDEILQHPFL (256 aa)) folds into the Protein kinase domain. ATP-binding positions include 42–50 (LGKGGFAKC) and Lys-65. Ser-71 is subject to Phosphoserine. Asp-159 acts as the Proton acceptor in catalysis. The tract at residues 399–433 (NFTKTGSWQSNLNGTQSVKGSSRPQTVQQKGDLKS) is disordered. A compositionally biased stretch (polar residues) spans 400 to 427 (FTKTGSWQSNLNGTQSVKGSSRPQTVQQ). 2 consecutive POLO box domains span residues 471–554 (WVKK…YLEG) and 574–626 (YVKK…PISP).

Belongs to the protein kinase superfamily. Ser/Thr protein kinase family. CDC5/Polo subfamily. Embryo.

The catalysed reaction is L-seryl-[protein] + ATP = O-phospho-L-seryl-[protein] + ADP + H(+). It carries out the reaction L-threonyl-[protein] + ATP = O-phospho-L-threonyl-[protein] + ADP + H(+). Its function is as follows. May play a role in the division of some cell types. This chain is Probable serine/threonine-protein kinase CCRP1 (CCRP1), found in Zea mays (Maize).